The primary structure comprises 945 residues: Leucine--tRNA ligase (945 aa).

The 'HIGH' region signature appears at 43-53 (PYPNGAVHIGH). The 'KMSKS' region motif lies at 638-642 (KMSKS). Residue Lys-641 coordinates ATP.

The protein belongs to the class-I aminoacyl-tRNA synthetase family.

It is found in the cytoplasm. The catalysed reaction is tRNA(Leu) + L-leucine + ATP = L-leucyl-tRNA(Leu) + AMP + diphosphate. The sequence is that of Leucine--tRNA ligase from Pyrobaculum islandicum (strain DSM 4184 / JCM 9189 / GEO3).